Reading from the N-terminus, the 445-residue chain is Cytochrome P450 monooxygenase penB (445 aa).

Residue Cys-381 coordinates heme.

This sequence belongs to the cytochrome P450 family. Requires heme as cofactor.

It participates in secondary metabolite biosynthesis. Its pathway is alkaloid biosynthesis. It functions in the pathway mycotoxin biosynthesis. Functionally, cytochrome P450 monooxygenase; part of the gene cluster that mediates the biosynthesis of penigequinolones, potent insecticidal alkaloids that contain a highly modified 10-carbon prenyl group. The first stage is catalyzed by the nonribosomal peptide synthetase penN that condenses anthranilic acid and O-methyl-L-tyrosine to produce 4'-methoxycyclopeptin. 4'-methoxycyclopeptin is then converted to 4'-methoxydehydrocyclopeptin by the ketoglutarate-dependent dioxygenase penM through dehydrogenation to form a double bond between C-alpha and C-beta of the O-methyltyrosine side chain. PenM also converts its first product methoxydehydrocyclopeptin to 4'-methoxycyclopenin. The following conversion of 4'methoxycyclopenin into 4'-methoxyviridicatin is catalyzed by the cyclopenase penL. 4'-methoxyviridicatin is the precursor of quinolone natural products, and is further converted to quinolinone B. The prenyltransferase penI then catalyzes the canonical Friedel-Crafts alkylation of quinolinone B with dimethylallyl cation to yield dimethylallyl quinolone, which is subjected to FAD-dependent dehydrogenation by the FAD-linked oxidoreductase penH to yield conjugated aryl diene. The delta(3') double bond then serves as the site of the second alkylation with DMAPP catalyzed by the prenyltransferase penG to yield a carbenium ion intermediate, which can be attacked by H(2)O to yield a styrenyl quinolone containing a C3'-hydroxyprenyl chain, or undergo cyclization to yield yaequinolones J1 and J2. The conversion of the styrenyl quinolone into the tetrahydrofuran-containing yaequinolone C is performed by the FAD-dependent monooxygenase penE and involves epoxidation of the terminal C7'-C8' olefin, followed by epoxide ring opening initiated by the C3' hydroxyl group. The predicted cysteine hydrolase penJ acts as an epoxide hydrolase that enhances the rate of the 5-exo-tet cyclization step, increasing the yield of yaequinolone C. PenF catalyzes the cationic rearrangement of the epoxide formed by penE (before ring opening to produce yaequinolone C) into yaequinolone D. Finally, the short-chain dehydrogenase/reductase (SDR)-like reductase penD, catalyzes both the dehydration of yaequinolone D and the reduction of the resulting oxonium to yield penigequinolone. In Penicillium thymicola, this protein is Cytochrome P450 monooxygenase penB.